The chain runs to 452 residues: Bifunctional protein GlmU (452 aa).

The pyrophosphorylase stretch occupies residues 1–232 (MTGRSCLTIV…EDEVRGINTK (232 aa)). Residues 11-14 (LAAG), Lys-25, Gln-78, and 83-84 (GT) each bind UDP-N-acetyl-alpha-D-glucosamine. A Mg(2+)-binding site is contributed by Asp-108. Residues Gly-144, Glu-158, Asn-173, and Asn-230 each coordinate UDP-N-acetyl-alpha-D-glucosamine. A Mg(2+)-binding site is contributed by Asn-230. Residues 233 to 253 (AQLAEAEQVMQARLRKEALDA) form a linker region. Residues 254-452 (GVTMVAPDTV…KLLAKKPKTG (199 aa)) form an N-acetyltransferase region. 2 residues coordinate UDP-N-acetyl-alpha-D-glucosamine: Arg-319 and Lys-337. The active-site Proton acceptor is His-349. The UDP-N-acetyl-alpha-D-glucosamine site is built by Tyr-352 and Asn-363. Residues Ala-366, 372-373 (NY), Ser-391, Ser-409, and Arg-426 contribute to the acetyl-CoA site.

In the N-terminal section; belongs to the N-acetylglucosamine-1-phosphate uridyltransferase family. This sequence in the C-terminal section; belongs to the transferase hexapeptide repeat family. Homotrimer. It depends on Mg(2+) as a cofactor.

The protein resides in the cytoplasm. It carries out the reaction alpha-D-glucosamine 1-phosphate + acetyl-CoA = N-acetyl-alpha-D-glucosamine 1-phosphate + CoA + H(+). It catalyses the reaction N-acetyl-alpha-D-glucosamine 1-phosphate + UTP + H(+) = UDP-N-acetyl-alpha-D-glucosamine + diphosphate. It participates in nucleotide-sugar biosynthesis; UDP-N-acetyl-alpha-D-glucosamine biosynthesis; N-acetyl-alpha-D-glucosamine 1-phosphate from alpha-D-glucosamine 6-phosphate (route II): step 2/2. It functions in the pathway nucleotide-sugar biosynthesis; UDP-N-acetyl-alpha-D-glucosamine biosynthesis; UDP-N-acetyl-alpha-D-glucosamine from N-acetyl-alpha-D-glucosamine 1-phosphate: step 1/1. The protein operates within bacterial outer membrane biogenesis; LPS lipid A biosynthesis. Functionally, catalyzes the last two sequential reactions in the de novo biosynthetic pathway for UDP-N-acetylglucosamine (UDP-GlcNAc). The C-terminal domain catalyzes the transfer of acetyl group from acetyl coenzyme A to glucosamine-1-phosphate (GlcN-1-P) to produce N-acetylglucosamine-1-phosphate (GlcNAc-1-P), which is converted into UDP-GlcNAc by the transfer of uridine 5-monophosphate (from uridine 5-triphosphate), a reaction catalyzed by the N-terminal domain. This is Bifunctional protein GlmU from Nitrobacter hamburgensis (strain DSM 10229 / NCIMB 13809 / X14).